Here is a 526-residue protein sequence, read N- to C-terminus: Peptide chain release factor 3 (526 aa).

A tr-type G domain is found at 8-277; sequence SKRRTFAIIS…GLTRWAPAPQ (270 aa). Residues 17 to 24, 85 to 89, and 139 to 142 each bind GTP; these read SHPDAGKT, DTPGH, and NKLD.

The protein belongs to the TRAFAC class translation factor GTPase superfamily. Classic translation factor GTPase family. PrfC subfamily.

The protein resides in the cytoplasm. Functionally, increases the formation of ribosomal termination complexes and stimulates activities of RF-1 and RF-2. It binds guanine nucleotides and has strong preference for UGA stop codons. It may interact directly with the ribosome. The stimulation of RF-1 and RF-2 is significantly reduced by GTP and GDP, but not by GMP. This is Peptide chain release factor 3 from Vibrio atlanticus (strain LGP32) (Vibrio splendidus (strain Mel32)).